Reading from the N-terminus, the 107-residue chain is Integration host factor subunit beta (107 aa).

Residues 76 to 107 are disordered; the sequence is FVPHFKPGKELRERVDGRAGEPLKADDPDDDR. The span at 82-101 shows a compositional bias: basic and acidic residues; the sequence is PGKELRERVDGRAGEPLKAD.

This sequence belongs to the bacterial histone-like protein family. In terms of assembly, heterodimer of an alpha and a beta chain.

This protein is one of the two subunits of integration host factor, a specific DNA-binding protein that functions in genetic recombination as well as in transcriptional and translational control. The protein is Integration host factor subunit beta of Burkholderia cenocepacia (strain HI2424).